Consider the following 93-residue polypeptide: Acylphosphatase (93 aa).

Positions 7–93 (RLTAWVHGRV…ADAIAGFTER (87 aa)) constitute an Acylphosphatase-like domain. Residues Arg22 and Asn40 contribute to the active site.

This sequence belongs to the acylphosphatase family.

It catalyses the reaction an acyl phosphate + H2O = a carboxylate + phosphate + H(+). The chain is Acylphosphatase (acyP) from Mycolicibacterium vanbaalenii (strain DSM 7251 / JCM 13017 / BCRC 16820 / KCTC 9966 / NRRL B-24157 / PYR-1) (Mycobacterium vanbaalenii).